Consider the following 273-residue polypeptide: Proteasome subunit beta type-10 (273 aa).

The residue at position 1 (M1) is an N-acetylmethionine. The propeptide at M1 to G39 is removed in mature form. The active-site Nucleophile is the T40. S230 bears the Phosphoserine mark.

The protein belongs to the peptidase T1B family. As to quaternary structure, the 26S proteasome consists of a 20S proteasome core and two 19S regulatory subunits. The 20S proteasome core is composed of 28 subunits that are arranged in four stacked rings, resulting in a barrel-shaped structure. The two end rings are each formed by seven alpha subunits, and the two central rings are each formed by seven beta subunits. The catalytic chamber with the active sites is on the inside of the barrel. Component of the immunoproteasome, where it displaces the equivalent housekeeping subunit PSMB7. Component of the spermatoproteasome, a form of the proteasome specifically found in testis. In terms of assembly, (Microbial infection) Interacts with HIV-1 TAT protein. Post-translationally, autocleaved. The resulting N-terminal Thr residue of the mature subunit is responsible for the nucleophile proteolytic activity.

The protein resides in the cytoplasm. The protein localises to the nucleus. The catalysed reaction is Cleavage of peptide bonds with very broad specificity.. Functionally, the proteasome is a multicatalytic proteinase complex which is characterized by its ability to cleave peptides with Arg, Phe, Tyr, Leu, and Glu adjacent to the leaving group at neutral or slightly basic pH. The proteasome has an ATP-dependent proteolytic activity. This subunit is involved in antigen processing to generate class I binding peptides. In Homo sapiens (Human), this protein is Proteasome subunit beta type-10 (PSMB10).